The chain runs to 204 residues: 5'-deoxynucleotidase HDDC2 (204 aa).

Alanine 2 is subject to N-acetylalanine. Serine 3 and serine 5 each carry phosphoserine. One can recognise an HD domain in the interval 46-148 (VSDHMYRMAV…VKQLDQCEMI (103 aa)). A divalent metal cation is bound by residues histidine 49, histidine 77, aspartate 78, glutamate 81, aspartate 86, isoleucine 87, and aspartate 143. A Phosphoserine modification is found at serine 204.

This sequence belongs to the HDDC2 family. As to quaternary structure, homodimer. Mn(2+) serves as cofactor. The cofactor is Co(2+). Mg(2+) is required as a cofactor.

It catalyses the reaction a 2'-deoxyribonucleoside 5'-phosphate + H2O = a 2'-deoxyribonucleoside + phosphate. Functionally, catalyzes the dephosphorylation of the nucleoside 5'-monophosphates deoxyadenosine monophosphate (dAMP), deoxycytidine monophosphate (dCMP), deoxyguanosine monophosphate (dGMP) and deoxythymidine monophosphate (dTMP). The sequence is that of 5'-deoxynucleotidase HDDC2 (HDDC2) from Homo sapiens (Human).